Reading from the N-terminus, the 341-residue chain is Glyceraldehyde-3-phosphate dehydrogenase, cytosolic (341 aa).

Residues 14 to 15 and D36 each bind NAD(+); that span reads RI. D-glyceraldehyde 3-phosphate contacts are provided by residues 153–155, T184, 213–214, and R236; these read SCT and TG. The Nucleophile role is filled by C154. Residue N318 participates in NAD(+) binding.

The protein belongs to the glyceraldehyde-3-phosphate dehydrogenase family. In terms of assembly, homotetramer.

The protein localises to the cytoplasm. It catalyses the reaction D-glyceraldehyde 3-phosphate + phosphate + NAD(+) = (2R)-3-phospho-glyceroyl phosphate + NADH + H(+). Its pathway is carbohydrate degradation; glycolysis; pyruvate from D-glyceraldehyde 3-phosphate: step 1/5. Key enzyme in glycolysis that catalyzes the first step of the pathway by converting D-glyceraldehyde 3-phosphate (G3P) into 3-phospho-D-glyceroyl phosphate. Essential for the maintenance of cellular ATP levels and carbohydrate metabolism. The polypeptide is Glyceraldehyde-3-phosphate dehydrogenase, cytosolic (GAPC) (Chlamydomonas reinhardtii (Chlamydomonas smithii)).